The primary structure comprises 105 residues: Replication restart protein PriB (105 aa).

Residues 1–102 enclose the SSB domain; sequence MTANRLTLSG…LHAEQIELID (102 aa).

It belongs to the PriB family. Homodimer. Interacts with PriA and DnaT. Component of the replication restart primosome. Primosome assembly occurs via a 'hand-off' mechanism. PriA binds to replication forks, subsequently PriB then DnaT bind; DnaT then displaces ssDNA to generate the helicase loading substrate.

In terms of biological role, involved in the restart of stalled replication forks, which reloads the replicative helicase on sites other than the origin of replication; the PriA-PriB pathway is the major replication restart pathway. During primosome assembly it facilitates complex formation between PriA and DnaT on DNA; stabilizes PriA on DNA. Stimulates the DNA unwinding activity of PriA helicase. In Serratia proteamaculans (strain 568), this protein is Replication restart protein PriB.